A 508-amino-acid polypeptide reads, in one-letter code: Probable metalloreductase AIM14 (508 aa).

The next 8 membrane-spanning stretches (helical) occupy residues 18-38, 70-90, 100-120, 137-157, 168-188, 198-218, 222-242, and 347-367; these read LPYGYYVLGVIVFYTIFLIVM, PLLLLLVFVPFIHKYSLVAYI, LSYVLVILNVLLTLRPANPIL, FVTVIGIIHGIGFIVKWSLDP, LFNFIGVIAFVPLFILMFASV, SFYVIHQLGQWAMVFLVPIHA, VTVPYFFILLALYIWRGISYI, and VAIVVGGSGISFGLSIFKYLQ. Residues 97-214 enclose the Ferric oxidoreductase domain; that stretch reads LGRLSYVLVI…LGQWAMVFLV (118 aa). The region spanning 241 to 361 is the FAD-binding FR-type domain; sequence YIYYSTTVNV…GGSGISFGLS (121 aa).

The protein belongs to the ferric reductase (FRE) family. AIM14 subfamily.

Its subcellular location is the membrane. Functionally, probable cell surface metalloreductase. May be involved in iron or copper homeostasis. This is Probable metalloreductase AIM14 (AIM14) from Kluyveromyces lactis (strain ATCC 8585 / CBS 2359 / DSM 70799 / NBRC 1267 / NRRL Y-1140 / WM37) (Yeast).